The sequence spans 356 residues: Neurogenic differentiation factor 1 (356 aa).

The segment at methionine 1–alanine 94 is disordered. The segment covering glutamate 58 to aspartate 78 has biased composition (acidic residues). Over residues proline 81 to lysine 93 the composition is skewed to basic residues. The Nuclear localization signal motif lies at lysine 87–lysine 93. Positions leucine 101–leucine 153 constitute a bHLH domain. 4 positions are modified to phosphoserine: serine 162, serine 259, serine 266, and serine 274. Serine 335 carries the phosphoserine; by CaMK2 modification.

In terms of assembly, efficient DNA-binding requires dimerization with another bHLH protein. Heterodimer with TCF3/E47; the heterodimer is inhibited in presence of ID2, but not NR0B2, to E-box element. Interacts with EP300; the interaction is inhibited by NR0B2. Interacts with RREB1. Interacts with ATOH8. Phosphorylated. In islet cells, phosphorylated on Ser-274 upon glucose stimulation; which may be required for nuclear localization. In activated neurons, phosphorylated on Ser-335; which promotes dendritic growth. Phosphorylated by MAPK1; phosphorylation regulates heterodimerization and DNA-binding activities. Phosphorylation on Ser-266 and Ser-274 increases transactivation on the insulin promoter in glucose-stimulated insulinoma cells.

The protein localises to the cytoplasm. Its subcellular location is the nucleus. Its function is as follows. Acts as a transcriptional activator: mediates transcriptional activation by binding to E box-containing promoter consensus core sequences 5'-CANNTG-3'. Associates with the p300/CBP transcription coactivator complex to stimulate transcription of the secretin gene as well as the gene encoding the cyclin-dependent kinase inhibitor CDKN1A. Contributes to the regulation of several cell differentiation pathways, like those that promote the formation of early retinal ganglion cells, inner ear sensory neurons, granule cells forming either the cerebellum or the dentate gyrus cell layer of the hippocampus, endocrine islet cells of the pancreas and enteroendocrine cells of the small intestine. Together with PAX6 or SIX3, is required for the regulation of amacrine cell fate specification. Also required for dendrite morphogenesis and maintenance in the cerebellar cortex. Associates with chromatin to enhancer regulatory elements in genes encoding key transcriptional regulators of neurogenesis. The sequence is that of Neurogenic differentiation factor 1 (NEUROD1) from Homo sapiens (Human).